The primary structure comprises 114 residues: Lymphotactin (114 aa).

The first 21 residues, 1–21, serve as a signal peptide directing secretion; it reads MRLLLLTFLGVCCFAAWVVEG. An intrachain disulfide couples C32 to C69. Positions 87-114 are disordered; the sequence is RASASKSKAETIPTQAQRSASTAVTLTG. Over residues 98 to 114 the composition is skewed to polar residues; it reads IPTQAQRSASTAVTLTG.

The protein belongs to the intercrine gamma family.

Its subcellular location is the secreted. Chemotactic activity for lymphocytes but not for monocytes or neutrophils. In thymus, mediates medullary accumulation of thymic dendritic cells and contributes to regulatoy T cell development, playing a role in self-tolerance establishment. The protein is Lymphotactin (Xcl1) of Rattus norvegicus (Rat).